A 954-amino-acid chain; its full sequence is Valine--tRNA ligase (954 aa).

Residues 48–58 (PNVTGSLHMGH) carry the 'HIGH' region motif. Positions 560 to 564 (KMSKS) match the 'KMSKS' region motif. Position 563 (lysine 563) interacts with ATP. A coiled-coil region spans residues 883 to 954 (AGFINKEAEL…QTQYQAIENL (72 aa)).

It belongs to the class-I aminoacyl-tRNA synthetase family. ValS type 1 subfamily. In terms of assembly, monomer.

The protein resides in the cytoplasm. It carries out the reaction tRNA(Val) + L-valine + ATP = L-valyl-tRNA(Val) + AMP + diphosphate. Functionally, catalyzes the attachment of valine to tRNA(Val). As ValRS can inadvertently accommodate and process structurally similar amino acids such as threonine, to avoid such errors, it has a 'posttransfer' editing activity that hydrolyzes mischarged Thr-tRNA(Val) in a tRNA-dependent manner. The sequence is that of Valine--tRNA ligase from Actinobacillus pleuropneumoniae serotype 3 (strain JL03).